A 306-amino-acid polypeptide reads, in one-letter code: MRVAFAGTPEFAATVLRGLLGSGHEVGLVISQPDAPRGRGRRTASPPVALLAREAGLPLLQPASISEAAGEISRHDALVVAAYGQILRPDTLYAARHGAYNVHASLLPAYRGAAPVERAIMDGERETGVTVIRMDEGLDTGPVALQRRVPIPPDMTGGELADLLARVGAEALVEVLDRLESGTLNLTRQDSSRASYAPRITRQDQEIDWSRDARRVHDQVRALSPHIGARTRHPEVEGPLKIWRTRVHREAGRELAPGELRAGDGRLFVGCESGVVEILELQLPGGRRLGAAEFLRGHSLTGALRR.

Residue S105–P108 coordinates (6S)-5,6,7,8-tetrahydrofolate.

It belongs to the Fmt family.

It catalyses the reaction L-methionyl-tRNA(fMet) + (6R)-10-formyltetrahydrofolate = N-formyl-L-methionyl-tRNA(fMet) + (6S)-5,6,7,8-tetrahydrofolate + H(+). Functionally, attaches a formyl group to the free amino group of methionyl-tRNA(fMet). The formyl group appears to play a dual role in the initiator identity of N-formylmethionyl-tRNA by promoting its recognition by IF2 and preventing the misappropriation of this tRNA by the elongation apparatus. The sequence is that of Methionyl-tRNA formyltransferase from Rubrobacter xylanophilus (strain DSM 9941 / JCM 11954 / NBRC 16129 / PRD-1).